The sequence spans 94 residues: MSMLVVVTENVPPRLRGRLAIWLLEVRAGVYVGDVSAKIREMIWEQIAGLAEEGNVVMAWATNTETGFEFQTFGLNRRTPVDLDGLRLVSFLPV.

Belongs to the CRISPR-associated endoribonuclease Cas2 protein family. E.coli-subtype subfamily. In terms of assembly, homodimer. Part of the Cas1-Cas2 complex. Forms a hexamer with 2 Cas1 dimers sandwiching a Cas2 dimer. The DNA lies across a flat surface extending from 1 Cas1 dimer, across the Cas2 dimer and contacting the other Cas1 dimer. Only 1 Cas1 protein from each dimer is catalytic, the other interacts with the Cas2 dimer and possibly target DNA.

Its function is as follows. CRISPR (clustered regularly interspaced short palindromic repeat), is an adaptive immune system that provides protection against mobile genetic elements (viruses, transposable elements and conjugative plasmids). CRISPR clusters contain sequences complementary to antecedent mobile elements and target invading nucleic acids. CRISPR clusters are transcribed and processed into CRISPR RNA (crRNA). The Cas1-Cas2 complex is involved in CRISPR adaptation, the first stage of CRISPR immunity, being required for the addition/removal of CRISPR spacers at the leader end of the CRISPR locus. The Cas1-Cas2 complex introduces staggered nicks into both strands of the CRISPR array near the leader repeat and joins the 5'-ends of the repeat strands with the 3'-ends of the new spacer sequence. Spacer DNA integration requires supercoiled target DNA and 3'-OH ends on the inserted (spacer) DNA and probably initiates with a nucleophilic attack of the C 3'-OH end of the protospacer on the minus strand of the first repeat sequence. Expression of Cas1-Cas2 in a strain lacking both genes permits spacer acquisition. Cas2 not seen to bind DNA alone; the Cas1-Cas2 complex preferentially binds CRISPR-locus DNA. Highest binding is seen to a dual forked DNA complex with 3'-overhangs and a protospacer-adjacent motif-complement specifically positioned. The protospacer DNA lies across a flat surface extending from 1 Cas1 dimer, across the Cas2 dimer and contacting the other Cas1 dimer; the 23 bp-long ds section of the DNA is bracketed by 1 Tyr-22 from each of the Cas1 dimers. Cas1 cuts within the 3'-overhang, to generate a 33-nucleotide DNA that is probably incorporated into the CRISPR leader by a cut-and-paste mechanism. This subunit's probable nuclease activity is not required for spacer acquisition. The polypeptide is CRISPR-associated endoribonuclease Cas2 (ygbF) (Escherichia coli (strain K12)).